Consider the following 533-residue polypeptide: (E)-beta-farnesene synthase (533 aa).

The Mg(2+) site is built by Asp286, Asp290, Asn430, Ser434, and Glu438. The DDXXD motif motif lies at 286 to 290 (DDMMD).

This sequence belongs to the terpene synthase family. It depends on Mg(2+) as a cofactor. Co(2+) is required as a cofactor. Mn(2+) serves as cofactor.

The protein resides in the cytoplasm. It carries out the reaction (2E,6E)-farnesyl diphosphate = (E)-beta-farnesene + diphosphate. The protein operates within secondary metabolite biosynthesis; terpenoid biosynthesis. In terms of biological role, sesquiterpene cyclase catalyzing the production of beta-farnesene and alpha-bergamotene in equal amounts from farnesyl diphosphate. Involved in indirect defense by producing volatile signals attracting natural enemies of herbivores. The chain is (E)-beta-farnesene synthase from Zea mays subsp. huehuetenangensis (San Antonio Huista teosinte).